The sequence spans 48 residues: Large ribosomal subunit protein eL40 (48 aa).

It belongs to the eukaryotic ribosomal protein eL40 family.

The protein is Large ribosomal subunit protein eL40 of Methanospirillum hungatei JF-1 (strain ATCC 27890 / DSM 864 / NBRC 100397 / JF-1).